The primary structure comprises 346 residues: Biotin synthase (346 aa).

The Radical SAM core domain occupies 38–256 (RQVQVSTLLS…IAIARIMMPT (219 aa)). Residues Cys53, Cys57, and Cys60 each contribute to the [4Fe-4S] cluster site. Cys97, Cys128, Cys188, and Arg260 together coordinate [2Fe-2S] cluster.

Belongs to the radical SAM superfamily. Biotin synthase family. Homodimer. Requires [4Fe-4S] cluster as cofactor. It depends on [2Fe-2S] cluster as a cofactor.

It catalyses the reaction (4R,5S)-dethiobiotin + (sulfur carrier)-SH + 2 reduced [2Fe-2S]-[ferredoxin] + 2 S-adenosyl-L-methionine = (sulfur carrier)-H + biotin + 2 5'-deoxyadenosine + 2 L-methionine + 2 oxidized [2Fe-2S]-[ferredoxin]. It functions in the pathway cofactor biosynthesis; biotin biosynthesis; biotin from 7,8-diaminononanoate: step 2/2. Its function is as follows. Catalyzes the conversion of dethiobiotin (DTB) to biotin by the insertion of a sulfur atom into dethiobiotin via a radical-based mechanism. This is Biotin synthase from Klebsiella pneumoniae (strain 342).